Consider the following 312-residue polypeptide: Malate dehydrogenase (312 aa).

Residues 7-13 (GAAGGIG) and Asp-34 contribute to the NAD(+) site. Substrate is bound by residues Arg-81 and Arg-87. Residues Asn-94 and 117–119 (ITN) contribute to the NAD(+) site. 2 residues coordinate substrate: Asn-119 and Arg-153. His-177 serves as the catalytic Proton acceptor. An NAD(+)-binding site is contributed by Met-227.

Belongs to the LDH/MDH superfamily. MDH type 1 family. As to quaternary structure, homodimer.

The catalysed reaction is (S)-malate + NAD(+) = oxaloacetate + NADH + H(+). In terms of biological role, catalyzes the reversible oxidation of malate to oxaloacetate. The sequence is that of Malate dehydrogenase from Escherichia coli O17:K52:H18 (strain UMN026 / ExPEC).